Reading from the N-terminus, the 285-residue chain is MLYLTKIRNAESEFTENEQKIADFLRANVSELKSVSSRKMAKQLGISQSSIVKFAQKLGAQGFTELRMALIGEYSASREKTNATALHLHSSITSDDSLEVIARKLNREKELALEQTCALFDYARLQKIIEVISKAPFIQITGLGGSALVGRDLSFKLMKIGYRVAYEADTHVQATVSQALKKGDVQIAISYSGSKKEIVLCAEAARKQGATVIAITSLADSPLRRLAHFTLDTVSGETEWRSSSMSTRTAQNSVTDLLFVGLVQLNDVESLKMIQRSSELTQRLK.

An HTH rpiR-type domain is found at 1 to 77 (MLYLTKIRNA…MALIGEYSAS (77 aa)). The H-T-H motif DNA-binding region spans 37-56 (SRKMAKQLGISQSSIVKFAQ). The region spanning 128–268 (IIEVISKAPF…FVGLVQLNDV (141 aa)) is the SIS domain.

In terms of assembly, homotetramer.

The protein operates within amino-sugar metabolism; N-acetylmuramate degradation [regulation]. Represses the expression of the murPQ operon involved in the uptake and degradation of N-acetylmuramic acid (MurNAc). Binds to two adjacent inverted repeats within the operator region. MurNAc 6-phosphate, the substrate of MurQ, is the specific inducer that weakens binding of MurR to the operator. This is HTH-type transcriptional regulator MurR from Shigella sonnei (strain Ss046).